Reading from the N-terminus, the 295-residue chain is Acetylglutamate kinase (295 aa).

Substrate-binding positions include 61–62, Arg83, and Asn187; that span reads GG.

The protein belongs to the acetylglutamate kinase family. ArgB subfamily.

The protein localises to the cytoplasm. It carries out the reaction N-acetyl-L-glutamate + ATP = N-acetyl-L-glutamyl 5-phosphate + ADP. The protein operates within amino-acid biosynthesis; L-arginine biosynthesis; N(2)-acetyl-L-ornithine from L-glutamate: step 2/4. Functionally, catalyzes the ATP-dependent phosphorylation of N-acetyl-L-glutamate. This is Acetylglutamate kinase from Methanocorpusculum labreanum (strain ATCC 43576 / DSM 4855 / Z).